The chain runs to 810 residues: Capsid protein VP1 (810 aa).

Disordered stretches follow at residues 316-366 (QTLS…GATT) and 373-392 (AMSL…NTSG). Over residues 348-366 (PHNSQGTDPQNPSSSGATT) the composition is skewed to polar residues. A compositionally biased stretch (gly residues) spans 379-390 (TGSGTSSGGGNT).

It localises to the virion. In terms of biological role, capsid protein self-assembles to form an icosahedral capsid with a T=1 symmetry, about 22 nm in diameter, and consisting of 60 copies of size variants of the capsid protein which differ in the N-terminus. The capsid encapsulates the genomic ssDNA. Capsid proteins are responsible for the attachment to host cell receptors. This attachment induces virion internalization predominantly through clathrin-dependent endocytosis. This Junonia coenia densovirus (isolate pBRJ/1990) (JcDNV) protein is Capsid protein VP1 (VP).